Consider the following 337-residue polypeptide: Casein kinase I isoform alpha (337 aa).

The region spanning 17–285 is the Protein kinase domain; that stretch reads YKLVRKIGSG…YLRQLFRILF (269 aa). ATP is bound by residues 23 to 31 and Lys46; that span reads IGSGSFGDI. Residue Asp136 is the Proton acceptor of the active site. Over residues 309–325 the composition is skewed to low complexity; the sequence is AASSSGQGQQAQTPTGK. Residues 309-337 form a disordered region; the sequence is AASSSGQGQQAQTPTGKQTDKSKSNMKGF.

This sequence belongs to the protein kinase superfamily. CK1 Ser/Thr protein kinase family. Casein kinase I subfamily. Autophosphorylated.

It is found in the cytoplasm. The protein resides in the cytoskeleton. The protein localises to the microtubule organizing center. It localises to the centrosome. Its subcellular location is the chromosome. It is found in the centromere. The protein resides in the kinetochore. The protein localises to the nucleus speckle. It localises to the cilium basal body. Its subcellular location is the spindle. The enzyme catalyses L-seryl-[protein] + ATP = O-phospho-L-seryl-[protein] + ADP + H(+). It catalyses the reaction L-threonyl-[protein] + ATP = O-phospho-L-threonyl-[protein] + ADP + H(+). Functionally, casein kinases are operationally defined by their preferential utilization of acidic proteins such as caseins as substrates. It can phosphorylate a large number of proteins. Participates in Wnt signaling. May play a role in segregating chromosomes during mitosis. May play a role in keratin cytoskeleton disassembly. The polypeptide is Casein kinase I isoform alpha (CSNK1A1) (Gallus gallus (Chicken)).